The following is a 406-amino-acid chain: MNGFAVIPSVTTTTTSGEPIASDVARKQNLLELDREGLERFFEDVLGEKRYRAHQVMKWIHHRYVADFEQMTDVGKALRTRLQACAEVRVPRVVFDKHSADGTHKWLLAMGTDRKNAIETVYIPDKGRGTLCVSSQIGCGLNCTFCSTATQGFNRNLTTAEIIGQVWVAARHLGNVPHQRRRLTNVVMMGMGEPLMNFDNVVRAMSVMRDDLGYGLSNKRVTLSTSGLVPMIDRLSTESDVSLAVSLHAPNDKLREQLVPLNKKYPIVELMASCERYLSVNRKRDSVTFEYTLMKGVNDKQEHAHELAKLMRQFDCAMQVKGAAKVNLIPFNPFPGTCYERSTEVDIRAFQKILLDAQILAMVRRTRGDDIDAACGQLKGQVVDRTRRQAEFRRTIEDRVGRDVAA.

E119 serves as the catalytic Proton acceptor. A Radical SAM core domain is found at D125–D370. A disulfide bond links C132 and C375. [4Fe-4S] cluster-binding residues include C139, C143, and C146. S-adenosyl-L-methionine contacts are provided by residues G192–E193, S224, S246–H248, and N332. C375 functions as the S-methylcysteine intermediate in the catalytic mechanism.

It belongs to the radical SAM superfamily. RlmN family. Requires [4Fe-4S] cluster as cofactor.

It is found in the cytoplasm. It catalyses the reaction adenosine(2503) in 23S rRNA + 2 reduced [2Fe-2S]-[ferredoxin] + 2 S-adenosyl-L-methionine = 2-methyladenosine(2503) in 23S rRNA + 5'-deoxyadenosine + L-methionine + 2 oxidized [2Fe-2S]-[ferredoxin] + S-adenosyl-L-homocysteine. It carries out the reaction adenosine(37) in tRNA + 2 reduced [2Fe-2S]-[ferredoxin] + 2 S-adenosyl-L-methionine = 2-methyladenosine(37) in tRNA + 5'-deoxyadenosine + L-methionine + 2 oxidized [2Fe-2S]-[ferredoxin] + S-adenosyl-L-homocysteine. Specifically methylates position 2 of adenine 2503 in 23S rRNA and position 2 of adenine 37 in tRNAs. m2A2503 modification seems to play a crucial role in the proofreading step occurring at the peptidyl transferase center and thus would serve to optimize ribosomal fidelity. In Xylella fastidiosa (strain M12), this protein is Dual-specificity RNA methyltransferase RlmN.